Reading from the N-terminus, the 90-residue chain is Small ribosomal subunit protein bS18 (90 aa).

Belongs to the bacterial ribosomal protein bS18 family. In terms of assembly, part of the 30S ribosomal subunit. Forms a tight heterodimer with protein bS6.

Its function is as follows. Binds as a heterodimer with protein bS6 to the central domain of the 16S rRNA, where it helps stabilize the platform of the 30S subunit. The protein is Small ribosomal subunit protein bS18 of Polynucleobacter asymbioticus (strain DSM 18221 / CIP 109841 / QLW-P1DMWA-1) (Polynucleobacter necessarius subsp. asymbioticus).